Reading from the N-terminus, the 62-residue chain is Large ribosomal subunit protein eL24 (62 aa).

4 residues coordinate Zn(2+): Cys6, Cys9, Cys32, and Cys36. The C4-type zinc-finger motif lies at 6-36 (CSFCEGTIEPGCGKKYVKKDGSVMHFCSSKC).

The protein belongs to the eukaryotic ribosomal protein eL24 family. Part of the 50S ribosomal subunit. Forms a cluster with proteins L3 and L14. Zn(2+) serves as cofactor.

Its function is as follows. Binds to the 23S rRNA. The sequence is that of Large ribosomal subunit protein eL24 from Methanococcus maripaludis (strain C5 / ATCC BAA-1333).